The sequence spans 909 residues: Protein NLP1 (909 aa).

4 disordered regions span residues 51-71 (KSLKQTEQSPSASTAMNDNSP), 536-556 (KEDPKELSSGRENSQLDPVPN), 568-605 (ASTPGLRVDIGPSTESASTGGGNMLSSRRPGEKKRAKT), and 690-745 (NSPN…ENTG). A compositionally biased stretch (polar residues) spans 55-70 (QTEQSPSASTAMNDNS). Residues 595-676 (RRPGEKKRAK…MDSVQGAQGS (82 aa)) form the RWP-RK domain. The segment covering 690–716 (NSPNMSSNGPSLKSNEQPSHLNAQTDN) has biased composition (polar residues). A compositionally biased stretch (low complexity) spans 725–745 (RSPSSSCSKSSGSSNNNENTG). The 84-residue stretch at 811–894 (AIKVKATFGE…HTIKISLNEA (84 aa)) folds into the PB1 domain.

Its subcellular location is the nucleus. In terms of biological role, probable transcription factor. The protein is Protein NLP1 (NLP1) of Arabidopsis thaliana (Mouse-ear cress).